The following is a 320-amino-acid chain: Ribose-phosphate pyrophosphokinase 3 (320 aa).

4 residues coordinate Mg(2+): D131, H133, D142, and D146.

Belongs to the ribose-phosphate pyrophosphokinase family.

It localises to the cytoplasm. It catalyses the reaction D-ribose 5-phosphate + ATP = 5-phospho-alpha-D-ribose 1-diphosphate + AMP + H(+). The protein operates within metabolic intermediate biosynthesis; 5-phospho-alpha-D-ribose 1-diphosphate biosynthesis; 5-phospho-alpha-D-ribose 1-diphosphate from D-ribose 5-phosphate (route I): step 1/1. In terms of biological role, 5-phosphoribose 1-diphosphate synthase involved in nucleotide, histidine, and tryptophan biosynthesis. Active in heteromultimeric complexes with other 5-phosphoribose 1-diphosphate synthases (PRS2, PRS3, PRS4 and PRS5). In Saccharomyces cerevisiae (strain ATCC 204508 / S288c) (Baker's yeast), this protein is Ribose-phosphate pyrophosphokinase 3 (PRS3).